A 147-amino-acid chain; its full sequence is Large ribosomal subunit protein uL15 (147 aa).

Residues 1-13 (MELHSLKAAEGSR) show a composition bias toward basic and acidic residues. The disordered stretch occupies residues 1–57 (MELHSLKAAEGSRKVRNRVGRGTSSGNGKTSGRGQKGQKSRSGGGVRPGFEGGQTEL). Composition is skewed to gly residues over residues 23-35 (TSSGNGKTSGRGQ) and 42-52 (SGGGVRPGFEG).

It belongs to the universal ribosomal protein uL15 family. Part of the 50S ribosomal subunit.

Functionally, binds to the 23S rRNA. The protein is Large ribosomal subunit protein uL15 of Lactococcus lactis subsp. lactis (strain IL1403) (Streptococcus lactis).